Reading from the N-terminus, the 301-residue chain is Probable alpha-L-glutamate ligase (301 aa).

An ATP-grasp domain is found at 104-287 (LQLLSRRGIG…VAGMIIEHLE (184 aa)). ATP-binding positions include lysine 141, 178–179 (EY), aspartate 187, and 211–213 (RSN). Positions 248, 260, and 262 each coordinate Mg(2+). Residues aspartate 248, glutamate 260, and asparagine 262 each coordinate Mn(2+).

It belongs to the RimK family. It depends on Mg(2+) as a cofactor. Mn(2+) is required as a cofactor.

This Pseudomonas entomophila (strain L48) protein is Probable alpha-L-glutamate ligase.